The sequence spans 377 residues: Glutamate 5-kinase (377 aa).

Residue Lys22 coordinates ATP. The substrate site is built by Ser62, Asp149, and Asn161. ATP contacts are provided by residues 181-182 and 223-229; these read TD and TGGMVTK. The PUA domain occupies 285–363; the sequence is RGVLVADSGA…AQLRRLLGEE (79 aa).

It belongs to the glutamate 5-kinase family.

It is found in the cytoplasm. The enzyme catalyses L-glutamate + ATP = L-glutamyl 5-phosphate + ADP. Its pathway is amino-acid biosynthesis; L-proline biosynthesis; L-glutamate 5-semialdehyde from L-glutamate: step 1/2. Functionally, catalyzes the transfer of a phosphate group to glutamate to form L-glutamate 5-phosphate. The protein is Glutamate 5-kinase of Bifidobacterium animalis subsp. lactis (strain AD011).